A 353-amino-acid chain; its full sequence is Protein-arginine kinase (353 aa).

Positions 24-256 constitute a Phosphagen kinase C-terminal domain; it reads IVLSSRIRLA…RTVIDTEEQA (233 aa). ATP-binding positions include 27-31, H93, R127, 178-182, and 209-214; these read SSRIR, RASVM, and RGLYGE. An RDXXRA motif of the pArg binding pocket involved in allosteric regulation motif is present at residues 339–344; it reads RDVRRA.

This sequence belongs to the ATP:guanido phosphotransferase family.

It carries out the reaction L-arginyl-[protein] + ATP = N(omega)-phospho-L-arginyl-[protein] + ADP + H(+). With respect to regulation, appears to be allosterically activated by the binding of pArg-containing polypeptides to the pArg-binding pocket localized in the C-terminal domain of McsB. Catalyzes the specific phosphorylation of arginine residues in proteins. The protein is Protein-arginine kinase of Symbiobacterium thermophilum (strain DSM 24528 / JCM 14929 / IAM 14863 / T).